Here is a 314-residue protein sequence, read N- to C-terminus: DNA topoisomerase 1B (314 aa).

The Topo IB-type catalytic domain maps to 77 to 314 (VQNRNAKRDR…VDHVKSSTDG (238 aa)). Tyr274 serves as the catalytic O-(3'-phospho-DNA)-tyrosine intermediate.

The protein belongs to the type IB topoisomerase family.

It catalyses the reaction ATP-independent breakage of single-stranded DNA, followed by passage and rejoining.. Releases the supercoiling and torsional tension of DNA introduced during the DNA replication and transcription by transiently cleaving and rejoining one strand of the DNA duplex. Introduces a single-strand break via transesterification at the specific target site 5'-[CT]CCTTp site in duplex DNA. The scissile phosphodiester is attacked by the catalytic tyrosine of the enzyme, resulting in the formation of a DNA-(3'-phosphotyrosyl)-enzyme intermediate and the expulsion of a 5'-OH DNA strand. The free DNA strand then undergoes passage around the unbroken strand thus removing DNA supercoils. Finally, in the religation step, the DNA 5'-OH attacks the covalent intermediate to expel the active-site tyrosine and restore the DNA phosphodiester backbone. The sequence is that of DNA topoisomerase 1B (TOP1) from Vaccinia virus (strain Ankara) (VACV).